Here is a 287-residue protein sequence, read N- to C-terminus: Glutamate racemase (287 aa).

The span at 1 to 15 (MATKPQDANTTSREA) shows a compositional bias: polar residues. A disordered region spans residues 1–25 (MATKPQDANTTSREAITSKADSPPR). Residues 32 to 33 (DS) and 64 to 65 (YG) each bind substrate. The active-site Proton donor/acceptor is Cys-96. 97-98 (NT) serves as a coordination point for substrate. The active-site Proton donor/acceptor is the Cys-208. 209–210 (TH) contributes to the substrate binding site.

The protein belongs to the aspartate/glutamate racemases family.

The enzyme catalyses L-glutamate = D-glutamate. Its pathway is cell wall biogenesis; peptidoglycan biosynthesis. Its function is as follows. Provides the (R)-glutamate required for cell wall biosynthesis. The chain is Glutamate racemase from Yersinia pseudotuberculosis serotype O:3 (strain YPIII).